Here is a 369-residue protein sequence, read N- to C-terminus: S-adenosylmethionine decarboxylase proenzyme 2 (369 aa).

Active-site residues include Glu9 and Glu12. Ser69 functions as the Schiff-base intermediate with substrate; via pyruvic acid in the catalytic mechanism. Ser69 is modified (pyruvic acid (Ser); by autocatalysis). Cys83 acts as the Proton donor; for catalytic activity in catalysis. Active-site proton acceptor; for processing activity residues include Ser236 and His249.

It belongs to the eukaryotic AdoMetDC family. Requires pyruvate as cofactor. Is synthesized initially as an inactive proenzyme. Formation of the active enzyme involves a self-maturation process in which the active site pyruvoyl group is generated from an internal serine residue via an autocatalytic post-translational modification. Two non-identical subunits are generated from the proenzyme in this reaction, and the pyruvate is formed at the N-terminus of the alpha chain, which is derived from the carboxyl end of the proenzyme. The post-translation cleavage follows an unusual pathway, termed non-hydrolytic serinolysis, in which the side chain hydroxyl group of the serine supplies its oxygen atom to form the C-terminus of the beta chain, while the remainder of the serine residue undergoes an oxidative deamination to produce ammonia and the pyruvoyl group blocking the N-terminus of the alpha chain.

The enzyme catalyses S-adenosyl-L-methionine + H(+) = S-adenosyl 3-(methylsulfanyl)propylamine + CO2. It functions in the pathway amine and polyamine biosynthesis; S-adenosylmethioninamine biosynthesis; S-adenosylmethioninamine from S-adenosyl-L-methionine: step 1/1. This is S-adenosylmethionine decarboxylase proenzyme 2 (SAMDC2) from Brassica juncea (Indian mustard).